A 134-amino-acid chain; its full sequence is Small ribosomal subunit protein uS9 (134 aa).

Positions 97-134 (ENRQDLKSCGFLTRDPRKKERKKYGHKKARKSFQFSKR) are disordered. Positions 115–134 (KERKKYGHKKARKSFQFSKR) are enriched in basic residues.

This sequence belongs to the universal ribosomal protein uS9 family.

This Chlamydia pneumoniae (Chlamydophila pneumoniae) protein is Small ribosomal subunit protein uS9 (rpsI).